The following is a 269-amino-acid chain: NAD kinase (269 aa).

Asp45 serves as the catalytic Proton acceptor. Residues 45–46 (DG), 122–123 (NE), Arg149, Asp151, and Ala186 each bind NAD(+).

This sequence belongs to the NAD kinase family. Requires a divalent metal cation as cofactor.

Its subcellular location is the cytoplasm. The enzyme catalyses NAD(+) + ATP = ADP + NADP(+) + H(+). In terms of biological role, involved in the regulation of the intracellular balance of NAD and NADP, and is a key enzyme in the biosynthesis of NADP. Catalyzes specifically the phosphorylation on 2'-hydroxyl of the adenosine moiety of NAD to yield NADP. The sequence is that of NAD kinase from Staphylococcus saprophyticus subsp. saprophyticus (strain ATCC 15305 / DSM 20229 / NCIMB 8711 / NCTC 7292 / S-41).